Here is a 95-residue protein sequence, read N- to C-terminus: Small ribosomal subunit protein bS6 (95 aa).

This sequence belongs to the bacterial ribosomal protein bS6 family.

Its function is as follows. Binds together with bS18 to 16S ribosomal RNA. In Bacillus cytotoxicus (strain DSM 22905 / CIP 110041 / 391-98 / NVH 391-98), this protein is Small ribosomal subunit protein bS6.